The primary structure comprises 78 residues: DNA-directed RNA polymerase subunit omega (78 aa).

Belongs to the RNA polymerase subunit omega family. The RNAP catalytic core consists of 2 alpha, 1 beta, 1 beta' and 1 omega subunit. When a sigma factor is associated with the core the holoenzyme is formed, which can initiate transcription.

The catalysed reaction is RNA(n) + a ribonucleoside 5'-triphosphate = RNA(n+1) + diphosphate. Promotes RNA polymerase assembly. Latches the N- and C-terminal regions of the beta' subunit thereby facilitating its interaction with the beta and alpha subunits. The chain is DNA-directed RNA polymerase subunit omega from Desulfovibrio desulfuricans (strain ATCC 27774 / DSM 6949 / MB).